Reading from the N-terminus, the 625-residue chain is Autophagy-related protein 13b (625 aa).

Composition is skewed to low complexity over residues 322-332 (PSVSCSPSPTR) and 455-477 (PSGV…SSRS). 3 disordered regions span residues 322 to 388 (PSVS…AVPR), 452 to 527 (FRRP…YPKK), and 544 to 564 (PPLR…NNNK). Residues 498 to 518 (ITDRNSRPGSFDHRGDIHEPF) show a composition bias toward basic and acidic residues.

Belongs to the ATG13 family. Plant subfamily.

The protein resides in the cytoplasmic vesicle. It is found in the autophagosome. Involved in autophagy in a nutritional condition dependent manner. The ATG1-ATG13 protein kinase complex regulates downstream events required for autophagosome enclosure and/or vacuolar delivery. Becomes a target of autophagy under nutrient starvation. Connects autophagy to plant nutritional status. This Arabidopsis thaliana (Mouse-ear cress) protein is Autophagy-related protein 13b.